The primary structure comprises 147 residues: Ribosome-binding factor A (147 aa).

Positions 126 to 147 (LKKNAQPAGDAHPYKDDDAMND) are disordered. A compositionally biased stretch (basic and acidic residues) spans 137–147 (HPYKDDDAMND).

This sequence belongs to the RbfA family. As to quaternary structure, monomer. Binds 30S ribosomal subunits, but not 50S ribosomal subunits or 70S ribosomes.

The protein resides in the cytoplasm. Its function is as follows. One of several proteins that assist in the late maturation steps of the functional core of the 30S ribosomal subunit. Associates with free 30S ribosomal subunits (but not with 30S subunits that are part of 70S ribosomes or polysomes). Required for efficient processing of 16S rRNA. May interact with the 5'-terminal helix region of 16S rRNA. This Corynebacterium diphtheriae (strain ATCC 700971 / NCTC 13129 / Biotype gravis) protein is Ribosome-binding factor A.